A 320-amino-acid chain; its full sequence is Malate dehydrogenase (320 aa).

Residues 10–15 (GSGMIG) and Asp34 contribute to the NAD(+) site. Residues Arg83 and Arg89 each contribute to the substrate site. NAD(+) is bound by residues Asn96 and 119–121 (ITN). Residues Asn121 and Arg152 each contribute to the substrate site. The Proton acceptor role is filled by His176.

The protein belongs to the LDH/MDH superfamily. MDH type 3 family.

It carries out the reaction (S)-malate + NAD(+) = oxaloacetate + NADH + H(+). Catalyzes the reversible oxidation of malate to oxaloacetate. This Rhizobium etli (strain CIAT 652) protein is Malate dehydrogenase.